The primary structure comprises 86 residues: Kappa-theraphotoxin-Cg1a 5 (86 aa).

The signal sequence occupies residues 1 to 21; that stretch reads MKVSVLITLAVLGVMFVWTSA. The propeptide occupies 22–50; sequence AELEERGSDQRDSPAWLKSMERIFQSEER. Cystine bridges form between cysteine 52–cysteine 66, cysteine 59–cysteine 71, and cysteine 65–cysteine 78. Phenylalanine 84 carries the phenylalanine amide modification.

This sequence belongs to the neurotoxin 10 (Hwtx-1) family. 28 (Jztx-11) subfamily. As to expression, expressed by the venom gland.

It localises to the secreted. Functionally, this toxin acts as a voltage-dependent gating-modifier. It inhibits the sodium conductance (IC(50)=124 nM) and slows the fast inactivation (EC(50)=1180 nM) of Nav1.5/SCN5A. It significantly shifts the activation to more depolarized voltages and decreases the deactivation of Nav1.5 currents upon extreme depolarization, but only slightly affects voltage-dependence of steady-state inactivation. In addition, this toxin causes an approximately five-fold decrease in the rate of recovery from inactivation and an approximately 1.9-fold reduction in the closed-state inactivation rate. This toxin integrates the functions of site 3 toxins (alpha-scorpion toxins) with site 4 toxins (beta-scorpion and spider toxins) by targeting multiple sites on Nav1.5. Also shows inhibition of voltage-gated potassium channels (5 uM completely inhibits Kv2.1/KCNB1, whereas 5 uM moderately inhibits Kv4.2/KCND2 Kv4.1/KCND1 channels). The sequence is that of Kappa-theraphotoxin-Cg1a 5 from Chilobrachys guangxiensis (Chinese earth tiger tarantula).